The chain runs to 150 residues: 3-dehydroquinate dehydratase (150 aa).

The Proton acceptor role is filled by Tyr25. 3 residues coordinate substrate: Asn76, His82, and Asp89. Catalysis depends on His102, which acts as the Proton donor. Substrate contacts are provided by residues Leu103–Ser104 and Arg113.

The protein belongs to the type-II 3-dehydroquinase family. Homododecamer.

The enzyme catalyses 3-dehydroquinate = 3-dehydroshikimate + H2O. It participates in metabolic intermediate biosynthesis; chorismate biosynthesis; chorismate from D-erythrose 4-phosphate and phosphoenolpyruvate: step 3/7. Functionally, catalyzes a trans-dehydration via an enolate intermediate. The sequence is that of 3-dehydroquinate dehydratase from Trichodesmium erythraeum (strain IMS101).